A 365-amino-acid polypeptide reads, in one-letter code: Patr class I histocompatibility antigen, A-126 alpha chain (365 aa).

Positions 1-24 are cleaved as a signal peptide; the sequence is MAVMAPRTLVLLLSGALALTQTWA. The alpha-1 stretch occupies residues 25–114; the sequence is GSHSMRYFST…LRGYYNQSED (90 aa). Residues 25-308 lie on the Extracellular side of the membrane; the sequence is GSHSMRYFST…EPSSQPTIPI (284 aa). Asn110 carries N-linked (GlcNAc...) asparagine glycosylation. The segment at 115 to 206 is alpha-2; it reads GSHTIQLMFG…ENGKETLQRT (92 aa). Intrachain disulfides connect Cys125/Cys188 and Cys227/Cys283. The interval 207 to 298 is alpha-3; sequence DPPKTHMTHH…GLPKPLTLRW (92 aa). Residues 209 to 295 enclose the Ig-like C1-type domain; that stretch reads PKTHMTHHPI…QHEGLPKPLT (87 aa). The segment at 299 to 308 is connecting peptide; sequence EPSSQPTIPI. Residues 309-332 form a helical membrane-spanning segment; sequence VGIIAGLVLLGAVITGAVVAAVMW. The Cytoplasmic segment spans residues 333 to 365; the sequence is RRKSSDRKGGSYSQAASSDSAQGSDVSLTACKV. The interval 338-365 is disordered; sequence DRKGGSYSQAASSDSAQGSDVSLTACKV. Residues 342-359 show a composition bias toward low complexity; that stretch reads GSYSQAASSDSAQGSDVS. Phosphoserine is present on Ser343. Residue Tyr344 is modified to Phosphotyrosine. Ser345, Ser349, Ser352, Ser356, and Ser359 each carry phosphoserine.

This sequence belongs to the MHC class I family. As to quaternary structure, heterodimer of an alpha chain and a beta chain (beta-2-microglobulin).

It is found in the membrane. Its function is as follows. Involved in the presentation of foreign antigens to the immune system. This Pan troglodytes (Chimpanzee) protein is Patr class I histocompatibility antigen, A-126 alpha chain (Patr-A).